Here is a 435-residue protein sequence, read N- to C-terminus: MKRRASDRGAGETSAKAQALGTGIAGNNAKRAGPFILGPRLGNSPVPSIVQCLARKDGTDDFYQLKILTLEERGEQGIESQEERQGKMLLHTEYSLLSLLHTQDGVVHHHGLFQDRTCEAVEDTESGRMVKKMKKRICLVLDCLCAHDFSDKTADLINLQHYVIKEKRLSERETVVIFYDVVRVVEALHQKNIVHRDLKLGNMVLNKRTHRITITNFCLGKHLVSEGDLLKDQRGSPAYISPDVLSGRPYRGKPSDMWALGVVLFTMLYGQFPFYDSIPQELFRKIKAAEYTIPEDGRVSENTVCLIRKLLVLDPQQRLAAADVLEALSAIIASWQSLSSLSGPLQVVPDIDDQMSSSDSSQEAKVTEECSQYEFENYMRQQLLLAEEKSSIHEARAWVPKRQFGSMPPVRRLGHDAQPMTSLDTAILAQRYLRK.

Positions F35–I332 constitute a Protein kinase domain. Residues L41 to I49 and K66 contribute to the ATP site. D197 (proton acceptor) is an active-site residue.

The protein belongs to the protein kinase superfamily. CAMK Ser/Thr protein kinase family.

Its subcellular location is the nucleus. It is found in the cytoplasm. The enzyme catalyses L-seryl-[protein] + ATP = O-phospho-L-seryl-[protein] + ADP + H(+). It carries out the reaction L-threonyl-[protein] + ATP = O-phospho-L-threonyl-[protein] + ADP + H(+). May be a negative regulator of NF-kappa-B and p53-mediated gene transcription. This chain is Serine/threonine-protein kinase 40 (Stk40), found in Rattus norvegicus (Rat).